Consider the following 120-residue polypeptide: Large ribosomal subunit protein uL18 (120 aa).

This sequence belongs to the universal ribosomal protein uL18 family. In terms of assembly, part of the 50S ribosomal subunit; part of the 5S rRNA/L5/L18/L25 subcomplex. Contacts the 5S and 23S rRNAs.

Functionally, this is one of the proteins that bind and probably mediate the attachment of the 5S RNA into the large ribosomal subunit, where it forms part of the central protuberance. In Rhodopseudomonas palustris (strain BisB5), this protein is Large ribosomal subunit protein uL18.